The sequence spans 632 residues: MAU2 chromatid cohesion factor homolog (632 aa).

2 TPR repeats span residues glycine 453–glutamate 486 and serine 493–isoleucine 526.

Belongs to the SCC4/mau-2 family. Interacts with Nipped-B to form the cohesin loading complex.

The protein localises to the nucleus. It localises to the nucleoplasm. Functionally, required for association of the cohesin complex with chromatin during interphase. Plays a role in sister chromatid cohesion and normal progression through prometaphase. This chain is MAU2 chromatid cohesion factor homolog, found in Drosophila melanogaster (Fruit fly).